The following is a 375-amino-acid chain: MTTPGTFEIHATDGAARTGCLHTAHGIVRTPIFMPVGTVGSVKAIAPDDLEAIGAEIILGNTYHLYLRPGDELVARRGGLHEFNAWRKPILTDSGGFQVFSLSGLRRIAEEGVEFRSHLDGSKHLFTPEKVVSIQRNLNSDIMMVLDECVPYGADRTYTEKSVGLTTRWAKRCRDAYPKGAAGNLLFGITQGGFFKDLRTRSIGELTDIDFDGFALGGLSVGEPKAEMMDLLYHSAPLLPADKPRYLMGVGTPLDIINGIAAGVDMFDCVLPTRNARNGTLYTSLGKLNIKRREFAEDDGPLDPACSCYTCRTFSRAYLRHLYTAKELLAFRLNSIHNLTYFLDLVRGARAAIAAGRFAEYKRSFEAIYPEEVVA.

Asp-93 acts as the Proton acceptor in catalysis. Substrate is bound by residues 93 to 97 (DSGGF), Asp-147, Gln-191, and Gly-218. Residues 249–255 (GVGTPLD) form an RNA binding region. Asp-268 acts as the Nucleophile in catalysis. The RNA binding; important for wobble base 34 recognition stretch occupies residues 273 to 277 (TRNAR). 4 residues coordinate Zn(2+): Cys-306, Cys-308, Cys-311, and His-337.

It belongs to the queuine tRNA-ribosyltransferase family. Homodimer. Within each dimer, one monomer is responsible for RNA recognition and catalysis, while the other monomer binds to the replacement base PreQ1. Zn(2+) serves as cofactor.

The catalysed reaction is 7-aminomethyl-7-carbaguanine + guanosine(34) in tRNA = 7-aminomethyl-7-carbaguanosine(34) in tRNA + guanine. It functions in the pathway tRNA modification; tRNA-queuosine biosynthesis. Catalyzes the base-exchange of a guanine (G) residue with the queuine precursor 7-aminomethyl-7-deazaguanine (PreQ1) at position 34 (anticodon wobble position) in tRNAs with GU(N) anticodons (tRNA-Asp, -Asn, -His and -Tyr). Catalysis occurs through a double-displacement mechanism. The nucleophile active site attacks the C1' of nucleotide 34 to detach the guanine base from the RNA, forming a covalent enzyme-RNA intermediate. The proton acceptor active site deprotonates the incoming PreQ1, allowing a nucleophilic attack on the C1' of the ribose to form the product. After dissociation, two additional enzymatic reactions on the tRNA convert PreQ1 to queuine (Q), resulting in the hypermodified nucleoside queuosine (7-(((4,5-cis-dihydroxy-2-cyclopenten-1-yl)amino)methyl)-7-deazaguanosine). The polypeptide is Queuine tRNA-ribosyltransferase (Nitratidesulfovibrio vulgaris (strain DP4) (Desulfovibrio vulgaris)).